A 301-amino-acid chain; its full sequence is Acetylglutamate kinase (301 aa).

Residues 68-69 (GG), R90, and N195 contribute to the substrate site.

It belongs to the acetylglutamate kinase family. ArgB subfamily.

It localises to the cytoplasm. The enzyme catalyses N-acetyl-L-glutamate + ATP = N-acetyl-L-glutamyl 5-phosphate + ADP. It functions in the pathway amino-acid biosynthesis; L-arginine biosynthesis; N(2)-acetyl-L-ornithine from L-glutamate: step 2/4. Its function is as follows. Catalyzes the ATP-dependent phosphorylation of N-acetyl-L-glutamate. The polypeptide is Acetylglutamate kinase (Pseudomonas putida (strain GB-1)).